Consider the following 561-residue polypeptide: Potassium-transporting ATPase potassium-binding subunit (561 aa).

11 helical membrane passes run 5-25, 60-80, 86-106, 131-151, 177-197, 247-267, 281-301, 376-396, 415-435, 489-509, and 531-551; these read LAAGLQIASVVAVLALVYVPL, CGYAGSVLGFSLAGVLVLYVL, VLPLSHGLAGVSPAVAFNTAV, GLAVQNFVSAAVGMAVAVALI, ILLPLAFVIALILLSQGVIQS, PTPLSNVVQILAILLIPVALT, LTVLAVMAGIYAVILGVTTAA, GLYGILVLAVIAVFVGGLLVG, ALAVLVMPALVLIGTAITVVL, LGLCMLFGRFLPILFVLALAG, and FAGLLTGTVVLVAALTFFPVL.

The protein belongs to the KdpA family. As to quaternary structure, the system is composed of three essential subunits: KdpA, KdpB and KdpC.

It localises to the cell membrane. Part of the high-affinity ATP-driven potassium transport (or Kdp) system, which catalyzes the hydrolysis of ATP coupled with the electrogenic transport of potassium into the cytoplasm. This subunit binds the extracellular potassium ions and delivers the ions to the membrane domain of KdpB through an intramembrane tunnel. This chain is Potassium-transporting ATPase potassium-binding subunit, found in Nocardia farcinica (strain IFM 10152).